Consider the following 153-residue polypeptide: uncharacterized protein (153 aa).

This is an uncharacterized protein from Allochromatium vinosum (strain ATCC 17899 / DSM 180 / NBRC 103801 / NCIMB 10441 / D) (Chromatium vinosum).